The primary structure comprises 166 residues: Putative signal peptidase complex catalytic subunit SEC11B (166 aa).

Residues Met-1–Leu-6 lie on the Cytoplasmic side of the membrane. Residues Tyr-7–Trp-24 form a helical; Signal-anchor for type II membrane protein membrane-spanning segment. Over Lys-25–Glu-166 the chain is Extracellular. Residue Ser-43 is part of the active site.

The protein belongs to the peptidase S26B family.

The protein localises to the membrane. The catalysed reaction is Cleavage of hydrophobic, N-terminal signal or leader sequences from secreted and periplasmic proteins.. Its function is as follows. Putative component of some signal peptidase complex which removes signal peptides from nascent proteins as they are translocated into the lumen of the endoplasmic reticulum. This Homo sapiens (Human) protein is Putative signal peptidase complex catalytic subunit SEC11B (SEC11B).